Here is a 338-residue protein sequence, read N- to C-terminus: Taste receptor type 2 member 39 (338 aa).

The Extracellular portion of the chain corresponds to 1-30 (MLGRCFPPNTKEKQQLRMIKLCDPAESELS). Residues 31–51 (PFLITLTLAVLLAEYLTGIIA) form a helical membrane-spanning segment. The Cytoplasmic segment spans residues 52 to 74 (NGFITAIHAAEWVQNKSVSTSGR). A helical membrane pass occupies residues 75 to 95 (ILVFLSVSRIALQSLMMLEIT). The Extracellular portion of the chain corresponds to 96–116 (ISSTSLSFYSEDAVYYAFKIS). A helical membrane pass occupies residues 117–137 (FIFLNFCSLWFAAWLSFFYFV). Over 138–156 (KIANFSYPLFLKLRWRISG) the chain is Cytoplasmic. Residues 157–177 (LIPWLLWLSVFISFSHSMFCI) traverse the membrane as a helical segment. The Extracellular portion of the chain corresponds to 178–205 (NICTGYCDNSFPIHSSNSTEKTYFSEIS). Residue N194 is glycosylated (N-linked (GlcNAc...) asparagine). Residues 206–226 (VVSLAFFFNLGIVIPLIMFIL) traverse the membrane as a helical segment. The Cytoplasmic segment spans residues 227-262 (AAILLILSLKRHTLHMGSNATGSKDPSMEAHIGAIK). A helical membrane pass occupies residues 263-283 (ATSYFLILYIFNAVALFIYLS). The Extracellular portion of the chain corresponds to 284 to 291 (NMFDINSL). The chain crosses the membrane as a helical span at residues 292 to 312 (WNTLCQIIMAAYPASHSILLI). Residues 313–338 (KDNPGLRRAWKQLQHRLHLYPKQWTL) are Cytoplasmic-facing.

It belongs to the G-protein coupled receptor T2R family.

It is found in the membrane. In terms of biological role, receptor that may play a role in the perception of bitterness and is gustducin-linked. May play a role in sensing the chemical composition of the gastrointestinal content. The activity of this receptor may stimulate alpha gustducin, mediate PLC-beta-2 activation and lead to the gating of TRPM5. The polypeptide is Taste receptor type 2 member 39 (TAS2R39) (Macaca mulatta (Rhesus macaque)).